We begin with the raw amino-acid sequence, 248 residues long: Mannose-binding protein C (248 aa).

Positions 1-20 (MSLFPSLPLLLLSVVAASYS) are cleaved as a signal peptide. The Collagen-like domain maps to 42–99 (GINGFPGKDGRDGTKGEKGEPGQGLRGLQGPPGKLGPPGNPGPSGSPGPKGQKGDPGK). Residues 43 to 111 (INGFPGKDGR…DCDSSLAASE (69 aa)) form a disordered region. Pro47 bears the 4-hydroxyproline mark. A compositionally biased stretch (basic and acidic residues) spans 49–61 (KDGRDGTKGEKGE). 4-hydroxyproline occurs at positions 73, 79, 82, and 88. Residues 75 to 87 (KLGPPGNPGPSGS) are compositionally biased toward pro residues. Positions 93–102 (QKGDPGKSPD) are enriched in basic and acidic residues. Residues 112 to 130 (RKALQTEMARIKKWLTFSL) are a coiled coil. The C-type lectin domain maps to 134 to 245 (VGNKFFLTNG…CSSSHLAVCE (112 aa)). 2 disulfide bridges follow: Cys155–Cys244 and Cys222–Cys236.

As to quaternary structure, oligomeric complex of 3 or more homotrimers. Interacts with MASP1 and MASP2. Interacts with MEP1A and MEP1B and may inhibit their catalytic activity. In terms of processing, hydroxylation on proline residues within the sequence motif, GXPG, is most likely to be 4-hydroxy as this fits the requirement for 4-hydroxylation in vertebrates.

It is found in the secreted. In terms of biological role, calcium-dependent lectin involved in innate immune defense. Binds mannose, fucose and N-acetylglucosamine on different microorganisms and activates the lectin complement pathway. Binds to late apoptotic cells, as well as to apoptotic blebs and to necrotic cells, but not to early apoptotic cells, facilitating their uptake by macrophages. The polypeptide is Mannose-binding protein C (MBL2) (Pongo pygmaeus (Bornean orangutan)).